The chain runs to 121 residues: MARIAGINIPPQQHAEIGLTAIFGIGRTRARKICEAANVPLSKKVKDLTDAELERIREHVGVFTVEGDLRREVQLSIKRLIDLGTYRGMRHKRGLPVRGQRTRTNARTRKGPRRAAASLKK.

The interval His-91–Lys-121 is disordered.

It belongs to the universal ribosomal protein uS13 family. As to quaternary structure, part of the 30S ribosomal subunit. Forms a loose heterodimer with protein S19. Forms two bridges to the 50S subunit in the 70S ribosome.

In terms of biological role, located at the top of the head of the 30S subunit, it contacts several helices of the 16S rRNA. In the 70S ribosome it contacts the 23S rRNA (bridge B1a) and protein L5 of the 50S subunit (bridge B1b), connecting the 2 subunits; these bridges are implicated in subunit movement. Contacts the tRNAs in the A and P-sites. In Bordetella petrii (strain ATCC BAA-461 / DSM 12804 / CCUG 43448), this protein is Small ribosomal subunit protein uS13.